We begin with the raw amino-acid sequence, 118 residues long: UPF0102 protein NE0711 (118 aa).

The protein belongs to the UPF0102 family.

This chain is UPF0102 protein NE0711, found in Nitrosomonas europaea (strain ATCC 19718 / CIP 103999 / KCTC 2705 / NBRC 14298).